A 117-amino-acid polypeptide reads, in one-letter code: Non-specific lipid-transfer protein B (117 aa).

The first 25 residues, 1–25 (MAGLVKLSCLVLACMIVAGPIATNA), serve as a signal peptide directing secretion. Intrachain disulfides connect Cys-29–Cys-76, Cys-39–Cys-53, Cys-54–Cys-99, and Cys-74–Cys-113.

This sequence belongs to the plant LTP family.

Functionally, plant non-specific lipid-transfer proteins transfer phospholipids as well as galactolipids across membranes. May play a role in wax or cutin deposition in the cell walls of expanding epidermal cells and certain secretory tissues. This Brassica oleracea var. italica (Broccoli) protein is Non-specific lipid-transfer protein B (WAX9B).